Here is a 294-residue protein sequence, read N- to C-terminus: Acetyl-coenzyme A carboxylase carboxyl transferase subunit beta (294 aa).

A CoA carboxyltransferase N-terminal domain is found at 25-294 (VWTKCTSCEQ…PLVVPVDGSH (270 aa)). Residues Cys29, Cys32, Cys48, and Cys51 each coordinate Zn(2+). The segment at 29–51 (CTSCEQVLYSAELERNLEVCPKC) adopts a C4-type zinc-finger fold.

This sequence belongs to the AccD/PCCB family. As to quaternary structure, acetyl-CoA carboxylase is a heterohexamer composed of biotin carboxyl carrier protein (AccB), biotin carboxylase (AccC) and two subunits each of ACCase subunit alpha (AccA) and ACCase subunit beta (AccD). The cofactor is Zn(2+).

Its subcellular location is the cytoplasm. The catalysed reaction is N(6)-carboxybiotinyl-L-lysyl-[protein] + acetyl-CoA = N(6)-biotinyl-L-lysyl-[protein] + malonyl-CoA. The protein operates within lipid metabolism; malonyl-CoA biosynthesis; malonyl-CoA from acetyl-CoA: step 1/1. Component of the acetyl coenzyme A carboxylase (ACC) complex. Biotin carboxylase (BC) catalyzes the carboxylation of biotin on its carrier protein (BCCP) and then the CO(2) group is transferred by the transcarboxylase to acetyl-CoA to form malonyl-CoA. This Aliivibrio fischeri (strain ATCC 700601 / ES114) (Vibrio fischeri) protein is Acetyl-coenzyme A carboxylase carboxyl transferase subunit beta.